A 553-amino-acid polypeptide reads, in one-letter code: Dihydroxy-acid dehydratase (553 aa).

Asp78 contributes to the Mg(2+) binding site. Residue Cys119 coordinates [2Fe-2S] cluster. Positions 120 and 121 each coordinate Mg(2+). Lys121 carries the post-translational modification N6-carboxylysine. Position 191 (Cys191) interacts with [2Fe-2S] cluster. Glu444 contributes to the Mg(2+) binding site. Ser470 acts as the Proton acceptor in catalysis.

Belongs to the IlvD/Edd family. Homodimer. [2Fe-2S] cluster is required as a cofactor. Mg(2+) serves as cofactor.

It carries out the reaction (2R)-2,3-dihydroxy-3-methylbutanoate = 3-methyl-2-oxobutanoate + H2O. The catalysed reaction is (2R,3R)-2,3-dihydroxy-3-methylpentanoate = (S)-3-methyl-2-oxopentanoate + H2O. Its pathway is amino-acid biosynthesis; L-isoleucine biosynthesis; L-isoleucine from 2-oxobutanoate: step 3/4. The protein operates within amino-acid biosynthesis; L-valine biosynthesis; L-valine from pyruvate: step 3/4. Functions in the biosynthesis of branched-chain amino acids. Catalyzes the dehydration of (2R,3R)-2,3-dihydroxy-3-methylpentanoate (2,3-dihydroxy-3-methylvalerate) into 2-oxo-3-methylpentanoate (2-oxo-3-methylvalerate) and of (2R)-2,3-dihydroxy-3-methylbutanoate (2,3-dihydroxyisovalerate) into 2-oxo-3-methylbutanoate (2-oxoisovalerate), the penultimate precursor to L-isoleucine and L-valine, respectively. The chain is Dihydroxy-acid dehydratase from Methanococcoides burtonii (strain DSM 6242 / NBRC 107633 / OCM 468 / ACE-M).